Here is a 444-residue protein sequence, read N- to C-terminus: Ribosome biogenesis protein WDR12 homolog (444 aa).

The interval 7 to 87 (VLVKFVTKLP…ESTLEVEYVP (81 aa)) is ubiquitin-like (UBL) domain. Residues 91–123 (PPQQKNSTPHDDWVSSVDGSRCAPASSSGGSPS) are disordered. WD repeat units follow at residues 105–148 (SSVD…VASV), 150–191 (AHAG…EEDA), and 203–242 (GHED…RWAA). A disordered region spans residues 243–264 (GTAEASKKKRKTGTANGSAAAG). WD repeat units follow at residues 272–310 (GHLH…AADT), 312–352 (NGSK…GSDA), 360–400 (AHGG…PLGM), and 403–444 (HHTD…YIVS).

This sequence belongs to the WD repeat WDR12/YTM1 family.

It is found in the nucleus. The protein localises to the nucleolus. It localises to the nucleoplasm. Required for maturation of ribosomal RNAs and formation of the large ribosomal subunit. The chain is Ribosome biogenesis protein WDR12 homolog from Chlamydomonas reinhardtii (Chlamydomonas smithii).